The primary structure comprises 365 residues: MKHNRLAIAALAPVLILVGCSTPLERRQASGGFDYLEQPAPTPLVVPAGLDAPRLSREFDIPKLGDNAERDVVGPRLDVRPPLQVLPLAPGTRIQDGVDSITVLVESNQDDIDLAQEIHDTLLKFLDDKSINVARDDSGVIVTDWIENEEVIGKSWFRDKVYQIRQRYEFDTVVKDHGRSGSITIELVDHEEGLDGVDDSIVLTDADRRRYAIDMLNNAIAYMNFERQQRQATQELLNGRGIKTELGFDSDENTAFVAEASFDQVWRRMDKVLPLLGFQVRDLDQQLATYFVDYEPDGGFWASLWGDNDELPLEEGPYQIRLEPMGERTAITLMDNEANPLPTETVTQMYNRFAELLQKESRDLQ.

The first 19 residues, 1 to 19 (MKHNRLAIAALAPVLILVG), serve as a signal peptide directing secretion. The N-palmitoyl cysteine moiety is linked to residue cysteine 20. The S-diacylglycerol cysteine moiety is linked to residue cysteine 20.

Belongs to the BamC family. Part of the Bam complex.

The protein resides in the cell outer membrane. Part of the outer membrane protein assembly complex, which is involved in assembly and insertion of beta-barrel proteins into the outer membrane. This is Outer membrane protein assembly factor BamC from Ferrimonas balearica (strain DSM 9799 / CCM 4581 / KCTC 23876 / PAT).